Here is a 444-residue protein sequence, read N- to C-terminus: N-succinylarginine dihydrolase (444 aa).

Substrate-binding positions include 19–28 (AGLSFGNVAS), N110, and 137–138 (HR). E174 is a catalytic residue. Residue R214 coordinates substrate. H250 is a catalytic residue. Substrate contacts are provided by D252 and N362. Catalysis depends on C368, which acts as the Nucleophile.

It belongs to the succinylarginine dihydrolase family. Homodimer.

It carries out the reaction N(2)-succinyl-L-arginine + 2 H2O + 2 H(+) = N(2)-succinyl-L-ornithine + 2 NH4(+) + CO2. It participates in amino-acid degradation; L-arginine degradation via AST pathway; L-glutamate and succinate from L-arginine: step 2/5. In terms of biological role, catalyzes the hydrolysis of N(2)-succinylarginine into N(2)-succinylornithine, ammonia and CO(2). This chain is N-succinylarginine dihydrolase, found in Shewanella putrefaciens (strain CN-32 / ATCC BAA-453).